The chain runs to 379 residues: Dihydroorotate dehydrogenase (quinone) (379 aa).

Residues 79 to 83 (AGCDK) and alanine 103 contribute to the FMN site. Residue lysine 83 coordinates substrate. 128–131 (NRLG) lines the substrate pocket. Residues asparagine 160 and asparagine 193 each coordinate FMN. Asparagine 193 provides a ligand contact to substrate. Serine 196 functions as the Nucleophile in the catalytic mechanism. Asparagine 198 lines the substrate pocket. FMN contacts are provided by lysine 231 and threonine 259. 260–261 (NT) contacts substrate. FMN contacts are provided by residues glycine 289, glycine 318, and 339-340 (YT).

Belongs to the dihydroorotate dehydrogenase family. Type 2 subfamily. As to quaternary structure, monomer. FMN is required as a cofactor.

The protein localises to the cell membrane. The catalysed reaction is (S)-dihydroorotate + a quinone = orotate + a quinol. It participates in pyrimidine metabolism; UMP biosynthesis via de novo pathway; orotate from (S)-dihydroorotate (quinone route): step 1/1. Catalyzes the conversion of dihydroorotate to orotate with quinone as electron acceptor. In Crocosphaera subtropica (strain ATCC 51142 / BH68) (Cyanothece sp. (strain ATCC 51142)), this protein is Dihydroorotate dehydrogenase (quinone).